The primary structure comprises 658 residues: Palmitoyltransferase ZDHHC5-B (658 aa).

Topologically, residues 1 to 24 (MPVGLSVGGALGDPSPSRPFRPSR) are cytoplasmic. A helical transmembrane segment spans residues 25 to 45 (YVPVSAATAFLVGATTLFLCF). The Extracellular portion of the chain corresponds to 46–56 (TCPWLSEKFSS). The chain crosses the membrane as a helical span at residues 57–77 (FIPLYNVVVFLFTLANFCMAT). Residues 78 to 159 (FMDPGVFPRA…NCIGRRNYRY (82 aa)) lie on the Cytoplasmic side of the membrane. Residues 115-165 (KWCSTCRFYRPPRCSHCSVCDNCVEEFDHHCPWVNNCIGRRNYRYFFLFLL) enclose the DHHC domain. The S-palmitoyl cysteine intermediate role is filled by cysteine 145. A helical transmembrane segment spans residues 160 to 180 (FFLFLLSLTVHIMDVFGFSLL). At 181-202 (YILHHTKQLDLVQSGVTMAVMC) the chain is on the extracellular side. The chain crosses the membrane as a helical span at residues 203-223 (VAGLFFVPVAGLTGFHVVLVA). At 224–658 (RGRTTNEQVT…VGGTTYEISV (435 aa)) the chain is on the cytoplasmic side. Disordered regions lie at residues 306–419 (EIME…RSGS), 490–522 (ESLL…LSTA), and 540–658 (QREG…EISV). Polar residues predominate over residues 360-398 (PGKNHTASTHSSKMSRGNSMTESPSVPVTTGQPSYRSDP). The segment covering 407 to 419 (GCRGGAEGGRSGS) has biased composition (gly residues). A compositionally biased stretch (pro residues) spans 565–575 (SSPPSRAPPLS). Positions 619–633 (SMPNSTIKQNVANHN) are enriched in polar residues. Basic residues predominate over residues 634 to 644 (THSHKPARGVK).

It belongs to the DHHC palmitoyltransferase family. ERF2/ZDHHC9 subfamily.

The protein localises to the cell membrane. It catalyses the reaction L-cysteinyl-[protein] + hexadecanoyl-CoA = S-hexadecanoyl-L-cysteinyl-[protein] + CoA. In terms of biological role, palmitoyltransferase that catalyzes the addition of palmitate onto various protein substrates and is involved in a variety of cellular processes. This chain is Palmitoyltransferase ZDHHC5-B, found in Danio rerio (Zebrafish).